The primary structure comprises 381 residues: MNLNFMPLLHAYNHVSIDFHFNSSARDFCVHEVPLYEFSNTGEHAVIQVRKSGLSTLEMLQIFSQILGVKIAELGYAGLKDKNALTTQFISLPKKYAPLLEKNTSNFQERNLKILSLNYHHNKIKLGHLKGNRFFMRFKKMTPLNAQKTEQVLEQIAQFGMPNYFGSQRFGKFNDNHKEGLKILQNETKFAHQKLNAFLISSYQSYLFNSLLSKRLEISKIISAFSVKESLEFFKQKNLSVHSNALKALKNQAHPFKILEGDVMRHYPYGKFFDALELEKESERFLNKEAVPTGLLDGKKALYAKNLSLEIEKGFQHNLLSGHAKTLGSRRFFWVFVENITSQYIKEKAQFELEFYLPKGSYASALLKEIKHEKGENNDEF.

The Nucleophile role is filled by Asp81. Residues 160-335 enclose the TRUD domain; it reads GMPNYFGSQR…TLGSRRFFWV (176 aa).

The protein belongs to the pseudouridine synthase TruD family.

The enzyme catalyses uridine(13) in tRNA = pseudouridine(13) in tRNA. Responsible for synthesis of pseudouridine from uracil-13 in transfer RNAs. This chain is tRNA pseudouridine synthase D, found in Helicobacter pylori (strain J99 / ATCC 700824) (Campylobacter pylori J99).